A 543-amino-acid chain; its full sequence is MDFSDDDMIDNKSGEENYSYGGGNESDDYNDVVDTIIPSEKSYVILKEEDILKLQRDDIERVSSILSLSQVEVIVLLLHYNWCVSKVEDEWFTDEERIRKAVGLLKEPVVDFNGGEKDKKCRKVNIQCGICFESYTREEIARVSCGHPYCKTCWAGYITTKIEDGPGCLRVKCPEPSCSAAVGKDMIEDVTETKVNEKYSRYILRSYVEDGKKIKWCPSPGCGYAVEFGGSESSSYDVSCLCSYRFCWNCSEDAHSPVDCDTVSKWIFKNQDESENKNWMLANSKPCPECKRPIEKNDGCNHMTCSAPCGHEFCWICLKAYRRHSGACNRFVVEQAESKRALLQSEIKRYTHYYVRWAENQSSRLKAMRDLEKLQSVQLKELSDNQCTSETQLQFTVDAWLQIIECRRVLKWTYAYGYYLQDLPKRKFFEYLQGEAESGLERLHHCAENELKQFFIKSEDPSDTFNAFRMKLTGLTTVTKTYFENLVKALENGLVDVTHNEFPPDNETKSTQEKYEEYQDYEDDFLETQRLYDEALLSGCYYD.

Positions 1–26 (MDFSDDDMIDNKSGEENYSYGGGNES) are disordered. Residues 124 to 332 (VNIQCGICFE…RHSGACNRFV (209 aa)) are TRIAD supradomain. Zn(2+)-binding residues include C128, C131, C145, H147, C150, C153, C173, C178, C217, C222, C240, C242, C247, C250, H255, C260, C287, and C290. The RING-type 1 zinc-finger motif lies at 128–178 (CGICFESYTREEIARVSCGHPYCKTCWAGYITTKIEDGPGCLRVKCPEPSC). The IBR-type zinc-finger motif lies at 197-260 (EKYSRYILRS…SEDAHSPVDC (64 aa)). An RING-type 2; atypical zinc finger spans residues 287 to 317 (CPECKRPIEKNDGCNHMTCSAPCGHEFCWIC). C300 is an active-site residue. C305, C309, C314, C317, H324, and C328 together coordinate Zn(2+).

Belongs to the RBR family. Ariadne subfamily. Zn(2+) serves as cofactor.

It catalyses the reaction [E2 ubiquitin-conjugating enzyme]-S-ubiquitinyl-L-cysteine + [acceptor protein]-L-lysine = [E2 ubiquitin-conjugating enzyme]-L-cysteine + [acceptor protein]-N(6)-ubiquitinyl-L-lysine.. It functions in the pathway protein modification; protein ubiquitination. Functionally, might act as an E3 ubiquitin-protein ligase, or as part of E3 complex, which accepts ubiquitin from specific E2 ubiquitin-conjugating enzymes and then transfers it to substrates. This chain is Probable E3 ubiquitin-protein ligase ARI9 (ARI9), found in Arabidopsis thaliana (Mouse-ear cress).